The sequence spans 310 residues: Transcriptional activator BRRF1 (310 aa).

The protein belongs to the lymphocryptovirus BBRF1 family.

Enhances the ability of BRLF1 to induce lytic infection by cooperating with it to transcriptionally activate the BZLF1 promoter. The polypeptide is Transcriptional activator BRRF1 (Epstein-Barr virus (strain AG876) (HHV-4)).